The primary structure comprises 104 residues: Large ribosomal subunit protein uL24 (104 aa).

Belongs to the universal ribosomal protein uL24 family. As to quaternary structure, part of the 50S ribosomal subunit.

Its function is as follows. One of two assembly initiator proteins, it binds directly to the 5'-end of the 23S rRNA, where it nucleates assembly of the 50S subunit. One of the proteins that surrounds the polypeptide exit tunnel on the outside of the subunit. This chain is Large ribosomal subunit protein uL24, found in Clostridium botulinum (strain Alaska E43 / Type E3).